The sequence spans 380 residues: Glucose-1-phosphate adenylyltransferase (380 aa).

Residues Gly164, 179 to 180 (EK), and Ser190 each bind alpha-D-glucose 1-phosphate.

The protein belongs to the bacterial/plant glucose-1-phosphate adenylyltransferase family. In terms of assembly, homotetramer.

It catalyses the reaction alpha-D-glucose 1-phosphate + ATP + H(+) = ADP-alpha-D-glucose + diphosphate. Its pathway is glycan biosynthesis; glycogen biosynthesis. Its function is as follows. Involved in the biosynthesis of ADP-glucose, a building block required for the elongation reactions to produce glycogen. Catalyzes the reaction between ATP and alpha-D-glucose 1-phosphate (G1P) to produce pyrophosphate and ADP-Glc. This chain is Glucose-1-phosphate adenylyltransferase, found in Streptococcus pneumoniae (strain CGSP14).